The sequence spans 812 residues: Phospholipase D alpha 1 (812 aa).

The region spanning 1–130 (MAQILLHGTL…LGGEEIDKWL (130 aa)) is the C2 domain. D190 serves as a coordination point for Ca(2+). In terms of domain architecture, PLD phosphodiesterase 1 spans 330-368 (TMFTHHQKIVVVDHEMPNQGSQQRRIVSFIGGIDLCDGR). Catalysis depends on residues H335, K337, and D342. Residue H335 participates in a 1,2-diacyl-sn-glycero-3-phosphate binding. The Ca(2+) site is built by H374 and H408. 2 residues coordinate a 1,2-diacyl-sn-glycero-3-phosphate: Q524 and H663. Positions 658-685 (FMIYVHTKMMIVDDEYIIIGSANINQRS) constitute a PLD phosphodiesterase 2 domain. Residues H663, K665, and D670 contribute to the active site. Ca(2+) is bound at residue E724.

It belongs to the phospholipase D family. C2-PLD subfamily. As to quaternary structure, monomer. The cofactor is Ca(2+).

It carries out the reaction a 1,2-diacyl-sn-glycero-3-phosphocholine + H2O = a 1,2-diacyl-sn-glycero-3-phosphate + choline + H(+). Its function is as follows. Hydrolyzes glycerol-phospholipids at the terminal phosphodiesteric bond. Plays an important role in various cellular processes. This Zea mays (Maize) protein is Phospholipase D alpha 1 (PLD1).